A 485-amino-acid polypeptide reads, in one-letter code: UBX domain-containing protein 11 (485 aa).

The interval 1–26 is disordered; it reads MSSPLASLSKTRKVPLESEPVNPGRR. Residues 67–143 adopt a coiled-coil conformation; the sequence is HDSELLTSMA…VGEMERFLND (77 aa). The region spanning 224-288 is the SEP domain; sequence LEPIPLKLYR…VSDLRNQVYP (65 aa). Residues 386–463 form the UBX domain; that stretch reads PVPPLSMLRI…GLVPNATLLL (78 aa). Serine 479 and serine 483 each carry phosphoserine.

In terms of assembly, interacts with GNA12, GNA13, RND1, RND2 and RND3. Strongly expressed in testis. Also expressed in lung, brain and thymus.

It is found in the cytoplasm. Its subcellular location is the cytoskeleton. May be involved in the reorganization of actin cytoskeleton mediated by RND1, RND2 and RND3. Promotes RHOA activation mediated by GNA12 and GNA13. The chain is UBX domain-containing protein 11 (Ubxn11) from Rattus norvegicus (Rat).